The primary structure comprises 82 residues: Small ribosomal subunit protein bS16 (82 aa).

Belongs to the bacterial ribosomal protein bS16 family.

This Deinococcus deserti (strain DSM 17065 / CIP 109153 / LMG 22923 / VCD115) protein is Small ribosomal subunit protein bS16.